A 419-amino-acid polypeptide reads, in one-letter code: L-rhamnose isomerase (419 aa).

Mn(2+) is bound by residues His262, Asp294, and Asp296.

The protein belongs to the rhamnose isomerase family. Homotetramer. It depends on Mn(2+) as a cofactor.

The protein resides in the cytoplasm. The enzyme catalyses L-rhamnopyranose = L-rhamnulose. It functions in the pathway carbohydrate degradation; L-rhamnose degradation; glycerone phosphate from L-rhamnose: step 1/3. Catalyzes the interconversion of L-rhamnose and L-rhamnulose. In Shigella boydii serotype 4 (strain Sb227), this protein is L-rhamnose isomerase.